The sequence spans 4377 residues: E3 ubiquitin-protein ligase HUWE1 (4377 aa).

A phosphoserine mark is found at S648 and S649. Disordered regions lie at residues K706–T758, D978–M1001, and T1018–I1038. A compositionally biased stretch (acidic residues) spans A725–V735. Positions A737–V756 are enriched in polar residues. S740 carries the post-translational modification Phosphoserine. S1084 carries the phosphoserine modification. Basic and acidic residues predominate over residues L1291–E1302. A disordered region spans residues L1291–Q1320. The UBA domain maps to Q1316–H1355. Residues S1368, S1370, S1382, and S1395 each carry the phosphoserine modification. Residues S1370–M1389 enclose the UIM domain. Positions P1396–E1415 are disordered. The region spanning R1603 to L1680 is the WWE domain. Positions K1690–K1733 are disordered. The segment covering E1699–G1719 has biased composition (basic and acidic residues). At S1907 the chain carries Phosphoserine. Disordered stretches follow at residues A2019 to L2065, S2262 to Q2343, and L2355 to L2479. The span at E2022–A2033 shows a compositional bias: polar residues. T2035 bears the Phosphothreonine mark. A compositionally biased stretch (basic and acidic residues) spans E2037–Q2057. Composition is skewed to low complexity over residues S2262 to S2271 and D2278 to Q2291. Position 2266 is a phosphoserine (S2266). K2267 bears the N6-acetyllysine mark. 2 stretches are compositionally biased toward acidic residues: residues E2295–H2306 and A2314–T2325. Phosphoserine is present on residues S2362, S2365, and S2391. Residues S2388 to A2398 show a composition bias toward polar residues. Residues D2408–P2472 show a composition bias toward acidic residues. A phosphoserine mark is found at S2527, S2532, and S2535. Phosphothreonine is present on T2554. Residues S2584, S2595, and S2619 each carry the phosphoserine modification. Residues I2704–D2716 show a composition bias toward basic and acidic residues. Disordered regions lie at residues I2704–P2970, I2991–P3012, and Q3036–V3059. The span at Q2717–D2736 shows a compositional bias: polar residues. The segment covering T2738 to S2756 has biased composition (low complexity). T2751 bears the Phosphothreonine mark. Polar residues-rich tracts occupy residues A2818–S2835, A2847–S2864, and A2877–P2890. Phosphoserine occurs at positions 2826, 2833, 2835, 2861, 2887, and 2888. Position 2889 is a phosphothreonine (T2889). Low complexity-rich tracts occupy residues P2913–A2932 and P2993–A3007. S2918 carries the post-translational modification Phosphoserine. S3116, S3117, S3122, S3127, and S3135 each carry phosphoserine. At R3149 the chain carries Omega-N-methylarginine. 5 disordered regions span residues P3243–N3266, T3352–S3383, G3405–A3429, S3471–V3514, and T3539–S3566. Residues R3355 to S3369 are compositionally biased toward basic and acidic residues. The segment covering K3370–S3383 has biased composition (low complexity). Low complexity-rich tracts occupy residues T3475 to P3503 and T3539 to T3552. 6 positions are modified to phosphoserine: S3557, S3663, S3753, S3758, S3760, and S3761. Positions T3738–A3759 are disordered. The segment covering G3749–A3759 has biased composition (low complexity). Disordered stretches follow at residues E3782–L3850 and R3897–L3951. The segment covering T3794 to T3803 has biased composition (polar residues). Residues S3810, S3818, and S3830 each carry the phosphoserine modification. Positions P3817–V3828 are enriched in polar residues. The residue at position 3833 (T3833) is a Phosphothreonine. Basic and acidic residues-rich tracts occupy residues G3836 to P3845 and R3897 to P3918. 2 positions are modified to phosphoserine: S3909 and S3922. The span at P3919 to P3928 shows a compositional bias: pro residues. 2 positions are modified to phosphothreonine: T3927 and T3930. The span at E3941–L3951 shows a compositional bias: polar residues. The 337-residue stretch at S4041 to A4377 folds into the HECT domain. Y4274 is subject to Phosphotyrosine. The Glycyl thioester intermediate role is filled by C4344.

This sequence belongs to the UPL family. TOM1/PTR1 subfamily. In terms of assembly, interacts with isoform p19ARF of CDKN2A which strongly inhibits HUWE1 ubiquitin ligase activity. Interacts with MYCN, POLB and CDC6. Interacts with PA2G4. Interacts with NR1D1. Interacts with AMBRA1. Interacts with HAPSTR1. Interacts with HAPSTR2. In hepatocytes, interacts with PAQR3; the interaction promotes PPARA poylubiquitination and STUB1-mediated degradation. Phosphorylated on tyrosine; phosphorylation is probably required for its ability to inhibit TP53 transactivation. In terms of tissue distribution, widely expressed.

Its subcellular location is the cytoplasm. The protein resides in the nucleus. The protein localises to the mitochondrion. It catalyses the reaction S-ubiquitinyl-[E2 ubiquitin-conjugating enzyme]-L-cysteine + [acceptor protein]-L-lysine = [E2 ubiquitin-conjugating enzyme]-L-cysteine + N(6)-ubiquitinyl-[acceptor protein]-L-lysine.. The protein operates within protein modification; protein ubiquitination. In terms of biological role, E3 ubiquitin-protein ligase which mediates ubiquitination and subsequent proteasomal degradation of target proteins. Regulates apoptosis by catalyzing the polyubiquitination and degradation of MCL1. Mediates monoubiquitination of DNA polymerase beta (POLB) at 'Lys-41', 'Lys-61' and 'Lys-81', thereby playing a role in base-excision repair. Also ubiquitinates the p53/TP53 tumor suppressor and core histones including H1, H2A, H2B, H3 and H4. Ubiquitinates MFN2 to negatively regulate mitochondrial fusion in response to decreased stearoylation of TFRC. Ubiquitination of MFN2 also takes place following induction of mitophagy; AMBRA1 acts as a cofactor for HUWE1-mediated ubiquitination. Regulates neural differentiation and proliferation by catalyzing the polyubiquitination and degradation of MYCN. May regulate abundance of CDC6 after DNA damage by polyubiquitinating and targeting CDC6 to degradation. Mediates polyubiquitination of PA2G4. Acts in concert with MYCBP2 to regulate the circadian clock gene expression by promoting the lithium-induced ubiquination and degradation of NR1D1. Binds to an upstream initiator-like sequence in the preprodynorphin gene. Mediates HAPSTR1 degradation, but is also a required cofactor in the pathway by which HAPSTR1 governs stress signaling. Acts as a regulator of the JNK and NF-kappa-B signaling pathways by mediating assembly of heterotypic 'Lys-63'-/'Lys-48'-linked branched ubiquitin chains that are then recognized by TAB2: HUWE1 mediates branching of 'Lys-48'-linked chains of substrates initially modified with 'Lys-63'-linked conjugates by TRAF6. 'Lys-63'-/'Lys-48'-linked branched ubiquitin chains protect 'Lys-63'-linkages from CYLD deubiquitination. Ubiquitinates PPARA in hepatocytes. This chain is E3 ubiquitin-protein ligase HUWE1 (Huwe1), found in Mus musculus (Mouse).